Reading from the N-terminus, the 225-residue chain is UPF0758 protein BCE33L4198 (225 aa).

The 123-residue stretch at 103–225 (SIRNPEDCAR…FVSLKEKGHI (123 aa)) folds into the MPN domain. Residues histidine 174, histidine 176, and aspartate 187 each coordinate Zn(2+). The short motif at 174 to 187 (HNHPSGDPAPSRED) is the JAMM motif element.

This sequence belongs to the UPF0758 family.

The sequence is that of UPF0758 protein BCE33L4198 from Bacillus cereus (strain ZK / E33L).